The primary structure comprises 400 residues: Na(+)/H(+) antiporter NhaA (400 aa).

A run of 12 helical transmembrane segments spans residues 26–46 (AGGI…NSPL), 71–91 (LIHW…GMEV), 107–127 (IFPA…YWFI), 137–157 (GWAI…ALLS), 166–186 (IFLL…IALF), 189–209 (HGLS…LILL), 212–232 (FKVS…ASVL), 233–253 (KSGV…PLKG), 273–293 (FVIL…GIDV), 299–319 (PLLL…IFGF), 340–360 (IFAV…LASL), and 373–393 (LSRL…YLFL).

This sequence belongs to the NhaA Na(+)/H(+) (TC 2.A.33) antiporter family.

It localises to the cell inner membrane. The enzyme catalyses Na(+)(in) + 2 H(+)(out) = Na(+)(out) + 2 H(+)(in). Na(+)/H(+) antiporter that extrudes sodium in exchange for external protons. In Haemophilus influenzae (strain 86-028NP), this protein is Na(+)/H(+) antiporter NhaA.